We begin with the raw amino-acid sequence, 129 residues long: Large ribosomal subunit protein bL12 (129 aa).

It belongs to the bacterial ribosomal protein bL12 family. As to quaternary structure, homodimer. Part of the ribosomal stalk of the 50S ribosomal subunit. Forms a multimeric L10(L12)X complex, where L10 forms an elongated spine to which 2 to 4 L12 dimers bind in a sequential fashion. Binds GTP-bound translation factors.

In terms of biological role, forms part of the ribosomal stalk which helps the ribosome interact with GTP-bound translation factors. Is thus essential for accurate translation. This is Large ribosomal subunit protein bL12 from Treponema pallidum (strain Nichols).